A 1385-amino-acid chain; its full sequence is Coiled-coil domain-containing protein 7 (1385 aa).

Residues 299-330 (LDAEYKQMQCDFQLLSEEKLVLENELQKLKDK) adopt a coiled-coil conformation. The tract at residues 329–364 (DKEKTKPTNNRTKKAVKTVKKKDKGKSEDSEKKMSP) is disordered. The segment covering 339-352 (RTKKAVKTVKKKDK) has biased composition (basic residues). Positions 353 to 364 (GKSEDSEKKMSP) are enriched in basic and acidic residues. Positions 374–411 (LDQVQKVARLEIENKVLQEQLKQALQEAEKAKHQLNYF) form a coiled coil. Disordered regions lie at residues 422–545 (GKTE…SKEV), 572–752 (TESK…EPNE), and 809–834 (TKKL…LKHQ). The segment covering 425–436 (ETTMQVGNSQTK) has biased composition (polar residues). Composition is skewed to basic and acidic residues over residues 437–455 (VKGE…RKSL) and 481–490 (LIEKSSEKKR). Polar residues-rich tracts occupy residues 493-503 (PAISDLSQILK), 511-528 (LESS…YKSP), and 536-545 (LTTVSSSKEV). The span at 573 to 589 (ESKKADVSEEQLQKMTE) shows a compositional bias: basic and acidic residues. Over residues 654–664 (RIQSETKNLKA) the composition is skewed to polar residues. Composition is skewed to basic and acidic residues over residues 665–676 (TRNESFHSHNDV) and 685–697 (QDTK…EVKK). Polar residues predominate over residues 701–711 (FQDNQLSTHNE). A compositionally biased stretch (basic and acidic residues) spans 712–726 (VPNERLVVEHQESLS).

Expressed in epithelium of normal cervix and cervical cancer. Overexpressed in early and interim cervical cancer.

In terms of biological role, may play a role in tumorigenesis. This is Coiled-coil domain-containing protein 7 (CCDC7) from Homo sapiens (Human).